The chain runs to 200 residues: Protein Mbur_1344 (200 aa).

The region spanning 5 to 192 is the AMMECR1 domain; the sequence is SEGEQTVRLA…EVEPRGDIEE (188 aa).

This chain is Protein Mbur_1344, found in Methanococcoides burtonii (strain DSM 6242 / NBRC 107633 / OCM 468 / ACE-M).